Reading from the N-terminus, the 415-residue chain is Gamma-glutamyl phosphate reductase (415 aa).

This sequence belongs to the gamma-glutamyl phosphate reductase family.

The protein resides in the cytoplasm. The enzyme catalyses L-glutamate 5-semialdehyde + phosphate + NADP(+) = L-glutamyl 5-phosphate + NADPH + H(+). It participates in amino-acid biosynthesis; L-proline biosynthesis; L-glutamate 5-semialdehyde from L-glutamate: step 2/2. Its function is as follows. Catalyzes the NADPH-dependent reduction of L-glutamate 5-phosphate into L-glutamate 5-semialdehyde and phosphate. The product spontaneously undergoes cyclization to form 1-pyrroline-5-carboxylate. This is Gamma-glutamyl phosphate reductase from Shouchella clausii (strain KSM-K16) (Alkalihalobacillus clausii).